Reading from the N-terminus, the 324-residue chain is Beta-ketoacyl-[acyl-carrier-protein] synthase III (324 aa).

Catalysis depends on residues Cys-112 and His-249. Residues 250-254 form an ACP-binding region; sequence QANDR. The active site involves Asn-279.

Belongs to the thiolase-like superfamily. FabH family. As to quaternary structure, homodimer.

It localises to the cytoplasm. It catalyses the reaction malonyl-[ACP] + acetyl-CoA + H(+) = 3-oxobutanoyl-[ACP] + CO2 + CoA. The protein operates within lipid metabolism; fatty acid biosynthesis. In terms of biological role, catalyzes the condensation reaction of fatty acid synthesis by the addition to an acyl acceptor of two carbons from malonyl-ACP. Catalyzes the first condensation reaction which initiates fatty acid synthesis and may therefore play a role in governing the total rate of fatty acid production. Possesses both acetoacetyl-ACP synthase and acetyl transacylase activities. Its substrate specificity determines the biosynthesis of branched-chain and/or straight-chain of fatty acids. In Streptococcus gordonii (strain Challis / ATCC 35105 / BCRC 15272 / CH1 / DL1 / V288), this protein is Beta-ketoacyl-[acyl-carrier-protein] synthase III.